Consider the following 609-residue polypeptide: Replication factor A protein 1 (609 aa).

Residues 130–152 (QNEQNNASAPRTGISTSTNSFYG) show a composition bias toward polar residues. The segment at 130 to 166 (QNEQNNASAPRTGISTSTNSFYGNNAAATAPAPPPMM) is disordered. A DNA-binding region (OB) is located at residues 192 to 278 (WTIRARVTNK…NEYELMFERD (87 aa)). A C4-type zinc finger spans residues 477-498 (CPAADCNKKVFDQGGSWRCEKC).

It belongs to the replication factor A protein 1 family. As to quaternary structure, component of the heterotrimeric canonical replication protein A complex (RPA).

Its subcellular location is the nucleus. Its function is as follows. As part of the replication protein A (RPA/RP-A), a single-stranded DNA-binding heterotrimeric complex, may play an essential role in DNA replication, recombination and repair. Binds and stabilizes single-stranded DNA intermediates, preventing complementary DNA reannealing and recruiting different proteins involved in DNA metabolism. The polypeptide is Replication factor A protein 1 (ssb1) (Schizosaccharomyces pombe (strain 972 / ATCC 24843) (Fission yeast)).